The primary structure comprises 178 residues: ATP synthase subunit delta (178 aa).

This sequence belongs to the ATPase delta chain family. F-type ATPases have 2 components, F(1) - the catalytic core - and F(0) - the membrane proton channel. F(1) has five subunits: alpha(3), beta(3), gamma(1), delta(1), epsilon(1). F(0) has three main subunits: a(1), b(2) and c(10-14). The alpha and beta chains form an alternating ring which encloses part of the gamma chain. F(1) is attached to F(0) by a central stalk formed by the gamma and epsilon chains, while a peripheral stalk is formed by the delta and b chains.

It is found in the cell membrane. Functionally, f(1)F(0) ATP synthase produces ATP from ADP in the presence of a proton or sodium gradient. F-type ATPases consist of two structural domains, F(1) containing the extramembraneous catalytic core and F(0) containing the membrane proton channel, linked together by a central stalk and a peripheral stalk. During catalysis, ATP synthesis in the catalytic domain of F(1) is coupled via a rotary mechanism of the central stalk subunits to proton translocation. In terms of biological role, this protein is part of the stalk that links CF(0) to CF(1). It either transmits conformational changes from CF(0) to CF(1) or is implicated in proton conduction. This Streptococcus agalactiae serotype Ia (strain ATCC 27591 / A909 / CDC SS700) protein is ATP synthase subunit delta.